The following is a 275-amino-acid chain: Thiazole synthase (275 aa).

The active-site Schiff-base intermediate with DXP is the Lys108. Residues Gly169, 196–197, and 218–219 contribute to the 1-deoxy-D-xylulose 5-phosphate site; these read AG and NT.

The protein belongs to the ThiG family. In terms of assembly, homotetramer. Forms heterodimers with either ThiH or ThiS.

It localises to the cytoplasm. It catalyses the reaction [ThiS sulfur-carrier protein]-C-terminal-Gly-aminoethanethioate + 2-iminoacetate + 1-deoxy-D-xylulose 5-phosphate = [ThiS sulfur-carrier protein]-C-terminal Gly-Gly + 2-[(2R,5Z)-2-carboxy-4-methylthiazol-5(2H)-ylidene]ethyl phosphate + 2 H2O + H(+). The protein operates within cofactor biosynthesis; thiamine diphosphate biosynthesis. Catalyzes the rearrangement of 1-deoxy-D-xylulose 5-phosphate (DXP) to produce the thiazole phosphate moiety of thiamine. Sulfur is provided by the thiocarboxylate moiety of the carrier protein ThiS. In vitro, sulfur can be provided by H(2)S. This chain is Thiazole synthase, found in Ralstonia pickettii (strain 12J).